Consider the following 387-residue polypeptide: Chaperone protein DnaJ (387 aa).

One can recognise a J domain in the interval 5-70; sequence DYYEILEVSA…QKRQAYDQFG (66 aa). The CR-type zinc finger occupies 130–208; that stretch reads GTTVDVRIPT…CRGEGYKHSS (79 aa). Positions 143, 146, 160, 163, 182, 185, 196, and 199 each coordinate Zn(2+). CXXCXGXG motif repeat units follow at residues 143 to 150, 160 to 167, 182 to 189, and 196 to 203; these read CESCDGSG, CPTCQGIG, CPNCHGTG, and CKTCRGEG.

This sequence belongs to the DnaJ family. Homodimer. Zn(2+) serves as cofactor.

The protein localises to the cytoplasm. Its function is as follows. Participates actively in the response to hyperosmotic and heat shock by preventing the aggregation of stress-denatured proteins and by disaggregating proteins, also in an autonomous, DnaK-independent fashion. Unfolded proteins bind initially to DnaJ; upon interaction with the DnaJ-bound protein, DnaK hydrolyzes its bound ATP, resulting in the formation of a stable complex. GrpE releases ADP from DnaK; ATP binding to DnaK triggers the release of the substrate protein, thus completing the reaction cycle. Several rounds of ATP-dependent interactions between DnaJ, DnaK and GrpE are required for fully efficient folding. Also involved, together with DnaK and GrpE, in the DNA replication of plasmids through activation of initiation proteins. This chain is Chaperone protein DnaJ, found in Hydrogenovibrio crunogenus (strain DSM 25203 / XCL-2) (Thiomicrospira crunogena).